The following is a 334-amino-acid chain: L-lactate dehydrogenase B-A chain (334 aa).

NAD(+) is bound by residues 30 to 58 (GQVG…VEDR) and R100. Residues R107, N139, and R170 each coordinate substrate. N139 is a binding site for NAD(+). H194 serves as the catalytic Proton acceptor. Residue T249 participates in substrate binding.

The protein belongs to the LDH/MDH superfamily. LDH family. Homotetramer.

Its subcellular location is the cytoplasm. The catalysed reaction is (S)-lactate + NAD(+) = pyruvate + NADH + H(+). It functions in the pathway fermentation; pyruvate fermentation to lactate; (S)-lactate from pyruvate: step 1/1. The chain is L-lactate dehydrogenase B-A chain (ldhba) from Danio rerio (Zebrafish).